We begin with the raw amino-acid sequence, 125 residues long: Holo-[acyl-carrier-protein] synthase (125 aa).

Mg(2+) is bound by residues D8 and E57.

The protein belongs to the P-Pant transferase superfamily. AcpS family. It depends on Mg(2+) as a cofactor.

The protein resides in the cytoplasm. It catalyses the reaction apo-[ACP] + CoA = holo-[ACP] + adenosine 3',5'-bisphosphate + H(+). In terms of biological role, transfers the 4'-phosphopantetheine moiety from coenzyme A to a Ser of acyl-carrier-protein. The chain is Holo-[acyl-carrier-protein] synthase from Aromatoleum aromaticum (strain DSM 19018 / LMG 30748 / EbN1) (Azoarcus sp. (strain EbN1)).